We begin with the raw amino-acid sequence, 622 residues long: Low affinity potassium transport system protein Kup (622 aa).

A run of 12 helical transmembrane segments spans residues 9-29 (LSAI…TSPL), 49-69 (VFGF…IKYL), 103-123 (VIMG…TPAI), 137-157 (PELD…LFMI), 165-185 (VGKL…GLGL), 213-233 (VSFI…ALYA), 247-267 (WFSV…ALLL), 276-296 (PFFL…AALA), 337-357 (IYIP…IVSF), 363-383 (LAAA…ILST), 396-416 (FVAL…SANL), and 419-439 (LLSG…IMTT).

Belongs to the HAK/KUP transporter (TC 2.A.72) family.

Its subcellular location is the cell inner membrane. It carries out the reaction K(+)(in) + H(+)(in) = K(+)(out) + H(+)(out). Its function is as follows. Responsible for the low-affinity transport of potassium into the cell. Likely operates as a K(+):H(+) symporter. The sequence is that of Low affinity potassium transport system protein Kup from Citrobacter koseri (strain ATCC BAA-895 / CDC 4225-83 / SGSC4696).